A 447-amino-acid polypeptide reads, in one-letter code: Cysteine--tRNA ligase (447 aa).

C28 provides a ligand contact to Zn(2+). Positions 30–40 (PTVYNYIHIGN) match the 'HIGH' region motif. Zn(2+) contacts are provided by C211, H236, and E240. The 'KMSKS' region signature appears at 268–272 (KMSKS). K271 provides a ligand contact to ATP.

It belongs to the class-I aminoacyl-tRNA synthetase family. As to quaternary structure, monomer. Requires Zn(2+) as cofactor.

The protein resides in the cytoplasm. It catalyses the reaction tRNA(Cys) + L-cysteine + ATP = L-cysteinyl-tRNA(Cys) + AMP + diphosphate. This is Cysteine--tRNA ligase from Streptococcus agalactiae serotype Ia (strain ATCC 27591 / A909 / CDC SS700).